The following is a 399-amino-acid chain: S-adenosylmethionine synthase (399 aa).

Histidine 16 is an ATP binding site. A Mg(2+)-binding site is contributed by aspartate 18. Residue glutamate 44 participates in K(+) binding. Glutamate 57 and glutamine 100 together coordinate L-methionine. The interval 100 to 110 (QSPDIAQGVDT) is flexible loop. Residues 175–177 (DGK), 246–247 (KF), aspartate 255, 261–262 (RK), alanine 278, and lysine 282 each bind ATP. Residue aspartate 255 participates in L-methionine binding. Residue lysine 286 coordinates L-methionine. Lysine 341 participates in a covalent cross-link: Isoglutamyl lysine isopeptide (Lys-Gln) (interchain with Q-Cter in protein Pup).

Belongs to the AdoMet synthase family. As to quaternary structure, homotetramer; dimer of dimers. Mg(2+) serves as cofactor. K(+) is required as a cofactor.

It is found in the cytoplasm. The catalysed reaction is L-methionine + ATP + H2O = S-adenosyl-L-methionine + phosphate + diphosphate. It functions in the pathway amino-acid biosynthesis; S-adenosyl-L-methionine biosynthesis; S-adenosyl-L-methionine from L-methionine: step 1/1. Its function is as follows. Catalyzes the formation of S-adenosylmethionine (AdoMet) from methionine and ATP. The overall synthetic reaction is composed of two sequential steps, AdoMet formation and the subsequent tripolyphosphate hydrolysis which occurs prior to release of AdoMet from the enzyme. The polypeptide is S-adenosylmethionine synthase (Mycolicibacterium smegmatis (strain ATCC 700084 / mc(2)155) (Mycobacterium smegmatis)).